The chain runs to 307 residues: Methionyl-tRNA formyltransferase (307 aa).

Residue 110–113 (SLLP) participates in (6S)-5,6,7,8-tetrahydrofolate binding.

It belongs to the Fmt family.

The enzyme catalyses L-methionyl-tRNA(fMet) + (6R)-10-formyltetrahydrofolate = N-formyl-L-methionyl-tRNA(fMet) + (6S)-5,6,7,8-tetrahydrofolate + H(+). Its function is as follows. Attaches a formyl group to the free amino group of methionyl-tRNA(fMet). The formyl group appears to play a dual role in the initiator identity of N-formylmethionyl-tRNA by promoting its recognition by IF2 and preventing the misappropriation of this tRNA by the elongation apparatus. This Chromobacterium violaceum (strain ATCC 12472 / DSM 30191 / JCM 1249 / CCUG 213 / NBRC 12614 / NCIMB 9131 / NCTC 9757 / MK) protein is Methionyl-tRNA formyltransferase.